The sequence spans 175 residues: Myosin regulatory light chain 2, atrial isoform (175 aa).

Position 2 is an N-acetylalanine (Ala-2). Ser-22 and Ser-23 each carry phosphoserine. 3 consecutive EF-hand domains span residues 32–67 (AQIQEFKEAFSCIDQNRDGIICKADLRETYSQLGKV), 102–137 (DPEEAILSAFRMFDPSGKGVVNKDEFKQLLLTQADK), and 138–173 (FSPAEVEQMFALTPMDLAGNIDYKSLCYIITHGDEK). Ca(2+)-binding residues include Asp-45, Asn-47, Asp-49, and Asp-56.

In terms of assembly, myosin is a hexamer of 2 heavy chains and 4 light chains. In terms of tissue distribution, predominantly expressed in adult atrial muscle.

This chain is Myosin regulatory light chain 2, atrial isoform (MYL7), found in Homo sapiens (Human).